Consider the following 162-residue polypeptide: Succinate dehydrogenase assembly factor 2, mitochondrial (162 aa).

The transit peptide at methionine 1 to tryptophan 35 directs the protein to the mitochondrion.

The protein belongs to the SDHAF2 family. Interacts with SDH1 within the SDH catalytic dimer.

It localises to the mitochondrion matrix. Plays an essential role in the assembly of succinate dehydrogenase (SDH), an enzyme complex (also referred to as respiratory complex II) that is a component of both the tricarboxylic acid (TCA) cycle and the mitochondrial electron transport chain, and which couples the oxidation of succinate to fumarate with the reduction of ubiquinone (coenzyme Q) to ubiquinol. Required for flavinylation (covalent attachment of FAD) of the flavoprotein subunit SDH1 of the SDH catalytic dimer. It is unclear whether it participates in the chemistry of FAD attachment (enzymatic function) or acts as a chaperone that maintains SDH1 in a conformation that is susceptible to autocatalytic FAD attachment. Does not bind FAD or FADH(2) in vitro. Involved in sporulation. Required for the full activation of the early meiotic inducer IME1. The protein is Succinate dehydrogenase assembly factor 2, mitochondrial of Saccharomyces cerevisiae (strain ATCC 204508 / S288c) (Baker's yeast).